A 238-amino-acid polypeptide reads, in one-letter code: Urease accessory protein UreG (238 aa).

The span at 1–15 (MPPHLIDGEPHDHAH) shows a compositional bias: basic and acidic residues. The disordered stretch occupies residues 1-27 (MPPHLIDGEPHDHAHDRPKRQRTPGEP). GTP is bound at residue 34–41 (GPVGSGKT).

The protein belongs to the SIMIBI class G3E GTPase family. UreG subfamily. In terms of assembly, homodimer. UreD, UreF and UreG form a complex that acts as a GTP-hydrolysis-dependent molecular chaperone, activating the urease apoprotein by helping to assemble the nickel containing metallocenter of UreC. The UreE protein probably delivers the nickel.

The protein resides in the cytoplasm. In terms of biological role, facilitates the functional incorporation of the urease nickel metallocenter. This process requires GTP hydrolysis, probably effectuated by UreG. This Nocardia farcinica (strain IFM 10152) protein is Urease accessory protein UreG.